Reading from the N-terminus, the 163-residue chain is ECF RNA polymerase sigma factor SigM (163 aa).

Positions 30–43 match the Polymerase core binding motif; it reads DLLQETFMRAYIHI. The H-T-H motif DNA-binding region spans 127-146; the sequence is YKEASHIMNISEANFKSVLF.

This sequence belongs to the sigma-70 factor family. ECF subfamily. In terms of assembly, interacts with the N-terminus of YhdL, which is probably its anti-sigma factor. Interacts transiently with the RNAP core.

Functionally, sigma factors are initiation factors that promote the attachment of RNA polymerase (RNAP) to specific initiation sites and are then released. Extracytoplasmic function (ECF) sigma factors are held in an inactive form by a cognate anti-sigma factor (YhdL) until released. This sigma factor is involved in the maintenance of membrane and cell wall integrity in response to environmental stresses including salt, acid, ethanol and antibiotics stress. Partially regulates transcription from a number of genes including disA. Associates with RNAP core under all growth phases. In Bacillus subtilis (strain 168), this protein is ECF RNA polymerase sigma factor SigM (sigM).